We begin with the raw amino-acid sequence, 2772 residues long: Protein DDB_G0276689 (2772 aa).

6 disordered regions span residues 50–82 (QQLK…NNNN), 371–415 (NLET…NGKS), 475–514 (LDIN…KNNL), 612–650 (NKNN…NNNE), 685–708 (LRGS…DSSL), and 933–982 (LVNN…NNSN). Low complexity-rich tracts occupy residues 376–412 (NNNN…NNNN), 478–514 (NSKN…KNNL), 614–649 (NNNN…NNNN), and 688–708 (SFSP…DSSL). The LRR 1 repeat unit spans residues 1065 to 1089 (LSKWILNLDDNNYNHIPFMSLVLMP). The tract at residues 1282 to 1319 (NNNNIDNNNNNNNNNNNNNNNNNNNNNNNNNNNNNNNN) is disordered. LRR repeat units follow at residues 1393–1416 (LSNL…TPKN) and 1543–1567 (HKDV…SFSN). Residues 1587-1619 (QNNNYNNNNYNNNYNNNNNNNNNNNNNNNNNNN) show a composition bias toward low complexity. The interval 1587-1622 (QNNNYNNNNYNNNYNNNNNNNNNNNNNNNNNNNIDN) is disordered. The LRR 4 repeat unit spans residues 1899–1922 (LEELTKQEIGYQVLLVLPTDLQVE). 2 stretches are compositionally biased toward polar residues: residues 1999–2011 (YVSN…NDQI) and 2073–2083 (LNIVHSTSPNS). Disordered stretches follow at residues 1999-2021 (YVSN…KDKK), 2054-2083 (EISN…SPNS), and 2367-2386 (NNSS…NNNN). The stretch at 2414 to 2439 (TTIINNIEMDKNRLDEAIYYLKKYGN) is one LRR 5 repeat.

In Dictyostelium discoideum (Social amoeba), this protein is Protein DDB_G0276689.